Here is a 378-residue protein sequence, read N- to C-terminus: uncharacterized protein (378 aa).

Residues 1–11 (MSQQTTPAEQK) are compositionally biased toward polar residues. Positions 1–33 (MSQQTTPAEQKSLQRKKPPFRADQVGSLLRSEP) are disordered.

This sequence to B.subtilis YxjH.

This is an uncharacterized protein from Bacillus subtilis (strain 168).